Here is a 565-residue protein sequence, read N- to C-terminus: Heme/hemopexin transporter protein HuxB (565 aa).

The first 26 residues, methionine 1–alanine 26, serve as a signal peptide directing secretion. In terms of domain architecture, POTRA spans phenylalanine 73 to glycine 150.

This sequence belongs to the TPS (TC 1.B.20) family.

The protein resides in the cell outer membrane. Likely functions in the release of soluble HxuA from the cell. Its function is as follows. Probable member of a two partner secretion pathway (TPS) in which it mediates the secretion of HuxA. This Haemophilus influenzae protein is Heme/hemopexin transporter protein HuxB (hxuB).